A 471-amino-acid chain; its full sequence is Ribosome biogenesis protein YTM1 (471 aa).

Positions 10–92 (VTARFTTRDE…ETRLEVEYTR (83 aa)) are ubiquitin-like (UBL) domain. WD repeat units lie at residues 119 to 158 (SRAG…LATS), 165 to 203 (GRIT…RTIT), and 210 to 249 (SHRW…NPVA). Residues 245-274 (ENPVAPSSLLPNSTAASNKRQKLSKPDRTV) form a disordered region. Positions 253–262 (LLPNSTAASN) are enriched in polar residues. 4 WD repeats span residues 285–325 (GHSS…CVDT), 327–366 (TTGH…TQIS), 372–412 (GHKN…TGGQ), and 436–471 (GHGE…ALGS). Residues 412 to 440 (QVGEGQQGESVHTIHRQGQSGPGKGHGEG) are disordered.

This sequence belongs to the WD repeat WDR12/YTM1 family. Component of the NOP7 complex, composed of ERB1, NOP7 and YTM1. The complex is held together by ERB1, which interacts with NOP7 via its N-terminal domain and with YTM1 via a high-affinity interaction between the seven-bladed beta-propeller domains of the 2 proteins. The NOP7 complex associates with the 66S pre-ribosome. Interacts (via UBL domain) with MDN1 (via VWFA/MIDAS domain).

It localises to the nucleus. The protein localises to the nucleolus. Its subcellular location is the nucleoplasm. Component of the NOP7 complex, which is required for maturation of the 25S and 5.8S ribosomal RNAs and formation of the 60S ribosome. This is Ribosome biogenesis protein YTM1 from Phaeosphaeria nodorum (strain SN15 / ATCC MYA-4574 / FGSC 10173) (Glume blotch fungus).